Reading from the N-terminus, the 217-residue chain is Ribonuclease HII (217 aa).

The RNase H type-2 domain maps to serine 27–cysteine 216. Residues aspartate 33, glutamate 34, and aspartate 126 each contribute to the a divalent metal cation site.

It belongs to the RNase HII family. Requires Mn(2+) as cofactor. It depends on Mg(2+) as a cofactor.

The protein localises to the cytoplasm. The catalysed reaction is Endonucleolytic cleavage to 5'-phosphomonoester.. Endonuclease that specifically degrades the RNA of RNA-DNA hybrids. This is Ribonuclease HII from Chlamydia trachomatis serovar A (strain ATCC VR-571B / DSM 19440 / HAR-13).